The following is a 119-amino-acid chain: Urotensin-2B (119 aa).

The first 28 residues, 1–28 (MNKILSSTVCFGLLTLLSVLSFLQSVHG), serve as a signal peptide directing secretion. A propeptide spanning residues 29–109 (RPYLTQGNEI…VDGLFSSHPS (81 aa)) is cleaved from the precursor. A disulfide bridge links Cys113 with Cys118.

This sequence belongs to the urotensin-2 family.

It localises to the secreted. Functionally, potent vasoconstrictor. The chain is Urotensin-2B (UTS2B) from Homo sapiens (Human).